Consider the following 282-residue polypeptide: tRNA pseudouridine synthase B (282 aa).

The Nucleophile role is filled by D39.

The protein belongs to the pseudouridine synthase TruB family. Type 1 subfamily.

The catalysed reaction is uridine(55) in tRNA = pseudouridine(55) in tRNA. Responsible for synthesis of pseudouridine from uracil-55 in the psi GC loop of transfer RNAs. The sequence is that of tRNA pseudouridine synthase B from Borreliella afzelii (strain PKo) (Borrelia afzelii).